The following is a 317-amino-acid chain: Protoheme IX farnesyltransferase (317 aa).

The next 6 helical transmembrane spans lie at 25 to 45 (FFALLKPRVMALVVFTALVGM), 54 to 74 (PVIGAVSLLMIAVGAGASGCL), 117 to 137 (LMLGLAANWLAAGLLAFTIVF), 167 to 189 (IGQAVVTGSVGIEGIILFLIIFI), 244 to 264 (LGFGGLIYGLVALLGGLAMLV), and 281 to 301 (AAMSLFGFSILYLFLLFSALL).

The protein belongs to the UbiA prenyltransferase family. Protoheme IX farnesyltransferase subfamily.

Its subcellular location is the cell inner membrane. It carries out the reaction heme b + (2E,6E)-farnesyl diphosphate + H2O = Fe(II)-heme o + diphosphate. Its pathway is porphyrin-containing compound metabolism; heme O biosynthesis; heme O from protoheme: step 1/1. Functionally, converts heme B (protoheme IX) to heme O by substitution of the vinyl group on carbon 2 of heme B porphyrin ring with a hydroxyethyl farnesyl side group. The protein is Protoheme IX farnesyltransferase of Methylobacterium nodulans (strain LMG 21967 / CNCM I-2342 / ORS 2060).